The following is a 206-amino-acid chain: Translation initiation factor IF-3 (206 aa).

It belongs to the IF-3 family. In terms of assembly, monomer.

The protein resides in the cytoplasm. Its function is as follows. IF-3 binds to the 30S ribosomal subunit and shifts the equilibrium between 70S ribosomes and their 50S and 30S subunits in favor of the free subunits, thus enhancing the availability of 30S subunits on which protein synthesis initiation begins. In Shigella flexneri, this protein is Translation initiation factor IF-3.